The sequence spans 382 residues: Galactokinase (382 aa).

34 to 37 lines the substrate pocket; that stretch reads EHTD. 124 to 130 contributes to the ATP binding site; that stretch reads GAGLSSS. Residues Ser130 and Glu162 each contribute to the Mg(2+) site. Catalysis depends on Asp174, which acts as the Proton acceptor. Tyr223 provides a ligand contact to substrate.

It belongs to the GHMP kinase family. GalK subfamily.

It is found in the cytoplasm. The catalysed reaction is alpha-D-galactose + ATP = alpha-D-galactose 1-phosphate + ADP + H(+). It functions in the pathway carbohydrate metabolism; galactose metabolism. Its function is as follows. Catalyzes the transfer of the gamma-phosphate of ATP to D-galactose to form alpha-D-galactose-1-phosphate (Gal-1-P). The chain is Galactokinase from Enterobacter sp. (strain 638).